A 423-amino-acid chain; its full sequence is Anthranilate 1,2-dioxygenase large subunit (423 aa).

One can recognise a Rieske domain in the interval 53–168 (WNFVALEAEI…VDSYRGLVFA (116 aa)). [2Fe-2S] cluster contacts are provided by Cys-95, His-97, Cys-115, and His-118. Fe cation-binding residues include His-223, His-228, and Asp-370.

It belongs to the bacterial ring-hydroxylating dioxygenase alpha subunit family. As to quaternary structure, part of a multicomponent enzyme system composed of a reductase (AndAa), a ferredoxin (AndAb) and a two-subunit oxygenase component (AndAc and AndAd). It depends on Fe cation as a cofactor. Requires [2Fe-2S] cluster as cofactor.

It catalyses the reaction anthranilate + NADH + O2 + 3 H(+) = catechol + NH4(+) + CO2 + NAD(+). The enzyme catalyses anthranilate + NADPH + O2 + 3 H(+) = catechol + NH4(+) + CO2 + NADP(+). It functions in the pathway aromatic compound metabolism; anthranilate degradation via hydroxylation; catechol from anthranilate: step 1/1. Its function is as follows. Oxygenase component of anthranilate dioxygenase multicomponent enzyme system which catalyzes the incorporation of both atoms of molecular oxygen into anthranilate to form catechol. Can also act on benzoate and salicylate but not on 2-chlorobenzoate or o-toluate. The chain is Anthranilate 1,2-dioxygenase large subunit from Burkholderia cepacia (Pseudomonas cepacia).